A 410-amino-acid chain; its full sequence is Peptidase T (410 aa).

His79 contacts Zn(2+). Asp81 is an active-site residue. Residue Asp142 participates in Zn(2+) binding. Glu176 (proton acceptor) is an active-site residue. The Zn(2+) site is built by Glu177, Asp199, and His381.

The protein belongs to the peptidase M20B family. The cofactor is Zn(2+).

Its subcellular location is the cytoplasm. It carries out the reaction Release of the N-terminal residue from a tripeptide.. In terms of biological role, cleaves the N-terminal amino acid of tripeptides. The protein is Peptidase T of Bacillus licheniformis (strain ATCC 14580 / DSM 13 / JCM 2505 / CCUG 7422 / NBRC 12200 / NCIMB 9375 / NCTC 10341 / NRRL NRS-1264 / Gibson 46).